A 434-amino-acid chain; its full sequence is Serine hydroxymethyltransferase (434 aa).

(6S)-5,6,7,8-tetrahydrofolate is bound by residues leucine 133 and 137-139 (GHL). Residue lysine 242 is modified to N6-(pyridoxal phosphate)lysine.

Belongs to the SHMT family. Homodimer. Pyridoxal 5'-phosphate is required as a cofactor.

Its subcellular location is the cytoplasm. The catalysed reaction is (6R)-5,10-methylene-5,6,7,8-tetrahydrofolate + glycine + H2O = (6S)-5,6,7,8-tetrahydrofolate + L-serine. The protein operates within one-carbon metabolism; tetrahydrofolate interconversion. It functions in the pathway amino-acid biosynthesis; glycine biosynthesis; glycine from L-serine: step 1/1. Functionally, catalyzes the reversible interconversion of serine and glycine with tetrahydrofolate (THF) serving as the one-carbon carrier. This reaction serves as the major source of one-carbon groups required for the biosynthesis of purines, thymidylate, methionine, and other important biomolecules. Also exhibits THF-independent aldolase activity toward beta-hydroxyamino acids, producing glycine and aldehydes, via a retro-aldol mechanism. This chain is Serine hydroxymethyltransferase, found in Methylobacterium radiotolerans (strain ATCC 27329 / DSM 1819 / JCM 2831 / NBRC 15690 / NCIMB 10815 / 0-1).